Here is a 133-residue protein sequence, read N- to C-terminus: Profilin-1 (133 aa).

Cysteines 95 and 117 form a disulfide.

It belongs to the profilin family. As to quaternary structure, dimer and tetramer. Occurs in many kinds of cells as a complex with monomeric actin in a 1:1 ratio.

It is found in the cytoplasm. It localises to the cytoskeleton. Its function is as follows. Binds to actin and affects the structure of the cytoskeleton. At high concentrations, profilin prevents the polymerization of actin, whereas it enhances it at low concentrations. By binding to PIP2, it inhibits the formation of IP3 and DG. Possesses high binding affinity for poly(L-proline). The sequence is that of Profilin-1 from Artemisia vulgaris (Mugwort).